A 1029-amino-acid chain; its full sequence is Protein SUPPRESSOR OF PHYA-105 1 (1029 aa).

The segment at 42–69 (SETANSDCPGSSAHRNVDLTKPPPPEEA) is disordered. Residues 188 to 529 (VQMKTPVSSS…ARDILKSELI (342 aa)) enclose the Protein kinase domain. Residues 194 to 202 (VSSSNFSQL) and K216 each bind ATP. A disordered region spans residues 213–269 (VVGKNQETPPEFVSDQDLGSKEKKLDISKSPTPHDVLPLKSSPKGNGMVSHGDGNHS). Residues 230–239 (LGSKEKKLDI) show a composition bias toward basic and acidic residues. D316 functions as the Proton acceptor in the catalytic mechanism. The segment at 347-392 (EDLNRRRPVVEESSSGGRDSKKRKMDLHLNSPGNQLQATSTGRPFK) is disordered. Residues 377-388 (SPGNQLQATSTG) are compositionally biased toward polar residues. Residues 557 to 589 (VQKKKKASKLLQDIQTLEDDIKEAERRYSSNVS) are a coiled coil. Residues 653–679 (ARSDKTLKDRDRCSENQNENQDMSTKG) are disordered. The segment covering 654 to 666 (RSDKTLKDRDRCS) has biased composition (basic and acidic residues). Over residues 667–679 (ENQNENQDMSTKG) the composition is skewed to polar residues. WD repeat units follow at residues 714 to 753 (NSAS…NESV), 763 to 803 (VNKS…GFSQ), 806 to 846 (EHQK…SLGT), 848 to 888 (WSPA…TPWC), 892 to 930 (GHEK…SSGL), 932 to 971 (PGAC…YSYY), and 997 to 1029 (DNGQ…LKLV). The DWD box motif lies at 866 to 881 (LAFGSADYKVYCYDLR).

As to quaternary structure, interacts with CO, COP1, HFR1, HY5 and PHYA. Light induces dissociation of the SPA1/COP1 complex. Binds to CRY1 in response to blue light, this interaction prevents SPA1/COP1 complex formation but stimulate CRY2/COP1 complex, and thus avoid COP1-dependent degradation of the transcription factor HY5 by the proteasome and promotes hypocotyl elongation.

The protein localises to the nucleus speckle. It is found in the nucleus. It localises to the PML body. Controls normal photoperiodic flowering and regulates circadian rhythms. Required for suppression of photomorphogenesis in dark-grown seedlings and for normal elongation growth of adult plants. Integral component of the COP1/SPA E3 ubiquitin-protein ligase complex. Involved in HY5, HFR1, LAF1 and CO degradation. The sequence is that of Protein SUPPRESSOR OF PHYA-105 1 (SPA1) from Arabidopsis thaliana (Mouse-ear cress).